A 393-amino-acid chain; its full sequence is Elongation factor Tu (393 aa).

Residues 10–203 form the tr-type G domain; the sequence is KPHVNIGTIG…AVDSYIPQPV (194 aa). The segment at 19 to 26 is G1; it reads GHVDHGKT. 19 to 26 is a binding site for GTP; the sequence is GHVDHGKT. Threonine 26 serves as a coordination point for Mg(2+). A G2 region spans residues 60–64; sequence GITIS. Positions 81-84 are G3; sequence DCPG. GTP-binding positions include 81 to 85 and 136 to 139; these read DCPGH and NKVD. The segment at 136-139 is G4; the sequence is NKVD. Residues 173-175 form a G5 region; sequence SAL.

This sequence belongs to the TRAFAC class translation factor GTPase superfamily. Classic translation factor GTPase family. EF-Tu/EF-1A subfamily. Monomer.

The protein localises to the cytoplasm. The enzyme catalyses GTP + H2O = GDP + phosphate + H(+). Functionally, GTP hydrolase that promotes the GTP-dependent binding of aminoacyl-tRNA to the A-site of ribosomes during protein biosynthesis. In Chlorobaculum tepidum (strain ATCC 49652 / DSM 12025 / NBRC 103806 / TLS) (Chlorobium tepidum), this protein is Elongation factor Tu.